The chain runs to 474 residues: Nucleobindin-1 (474 aa).

The first 24 residues, M1 to A24, serve as a signal peptide directing secretion. S83 bears the Phosphoserine mark. T145 is subject to Phosphothreonine. Residues E147–K215 are a coiled coil. Positions S190 to Q207 are enriched in basic and acidic residues. Positions S190 to V218 are disordered. The interval L225–T318 is binds to GNAI2 and GNAI3. EF-hand domains are found at residues P237–K272 and E289–G324. The Ca(2+) site is built by D250, N252, D254, E261, D302, N304, D306, and E313. Positions N300–W330 match the GBA motif. Residues A355–N422 are a coiled coil. Residues L382–L474 form a disordered region. The residue at position 383 (S383) is a Phosphoserine. Residues D448–P460 are compositionally biased toward basic and acidic residues. Residue S471 is modified to Phosphoserine.

Belongs to the nucleobindin family. As to quaternary structure, interacts (via GBA motif) with guanine nucleotide-binding protein G(i) alpha subunits GNAI1, GNAI2 and GNAI3 with higher affinity for GNAI1 and GNAI3 than for GNAI2. Preferentially interacts with inactive rather than active GNAI3. Interaction with GNAI3 is inhibited when NUCB1 binds calcium, probably due to a conformational change which renders the GBA motif inaccessible. Expressed in bone where it is detected in the soft tissue in the center of the osteon and in the osteocyte lacuna (at protein level).

It localises to the golgi apparatus. Its subcellular location is the cis-Golgi network membrane. The protein localises to the cytoplasm. It is found in the secreted. Its function is as follows. Major calcium-binding protein of the Golgi which may have a role in calcium homeostasis. Acts as a non-receptor guanine nucleotide exchange factor which binds to and activates alpha subunits of guanine nucleotide-binding proteins (G proteins). The protein is Nucleobindin-1 (NUCB1) of Bos taurus (Bovine).